A 409-amino-acid chain; its full sequence is Pleckstrin homology domain-containing family O member 1 (409 aa).

The interval 1 to 20 (MMKKNNSTKRGPQDGNHQCA) is disordered. The 112-residue stretch at 21-132 (PPEKVGWVRK…WINALNSAIT (112 aa)) folds into the PH domain. The tract at residues 133-193 (RAKNRVLDEV…MLTLDLIQEE (61 aa)) is interaction with capping proteins (CPs). Residues 136-308 (NRVLDEVTVE…PHAPGQLSRI (173 aa)) form an interaction with ATM, CKIP, IFP35 and NMI region. Disordered regions lie at residues 218–304 (LAGS…APGQ), 325–350 (EVQG…ESEQ), and 390–409 (TPDS…KSLM). Phosphoserine occurs at positions 227 and 271. The interval 308 to 409 (IQDLVARKLE…QHSQYRKSLM (102 aa)) is negative regulator of AP-1 activity. The span at 331-340 (DGKRKAKEPP) shows a compositional bias: basic and acidic residues. The residue at position 342 (Ser-342) is a Phosphoserine. Over residues 390–402 (TPDSHLRQTTQHS) the composition is skewed to polar residues.

As to quaternary structure, heterodimer or homodimer. Interacts with CK2 and actin capping subunits (capping protein CP-alpha and CP-beta). CKIP1 and CK2 together inhibit the activity of actin capping protein at the barbed ends of actin filaments. Interacts with ATM, IFP35, JUN, JUND, NMI and PI3K. Interacts with AKT1, AKT2 and AKT3 (each isozyme of PKB), PtdIns(3,5)P2, PtdIns(4,5)P2 and PtdIns(3,4,5)P2. Post-translationally, C-terminal fragments could be released during apoptosis via caspase-3-dependent cleavage.

It is found in the membrane. The protein localises to the nucleus. It localises to the cytoplasm. Functionally, plays a role in the regulation of the actin cytoskeleton through its interactions with actin capping protein (CP). May function to target CK2 to the plasma membrane thereby serving as an adapter to facilitate the phosphorylation of CP by protein kinase 2 (CK2). Appears to target ATM to the plasma membrane. Also implicated in PI3K-regulated muscle differentiation, the regulation of AP-1 activity (plasma membrane bound AP-1 regulator that translocates to the nucleus) and the promotion of apoptosis induced by tumor necrosis factor TNF. When bound to PKB, it inhibits it probably by decreasing PKB level of phosphorylation. The chain is Pleckstrin homology domain-containing family O member 1 (PLEKHO1) from Bos taurus (Bovine).